A 525-amino-acid chain; its full sequence is Mitogen-activated protein kinase kinase 5 (525 aa).

The Protein kinase domain maps to 59–317 (ETEGGFLGKG…CTELLRHPFI (259 aa)). ATP contacts are provided by residues 65–73 (LGKGSSGSV) and K88. D178 (proton acceptor) is an active-site residue. The segment covering 358-367 (SALPLASEGG) has biased composition (low complexity). 2 disordered regions span residues 358-392 (SALP…ERHD) and 438-468 (SASV…AQHR).

It belongs to the protein kinase superfamily. STE Ser/Thr protein kinase family. MAP kinase kinase subfamily. Requires Mg(2+) as cofactor.

The catalysed reaction is L-tyrosyl-[protein] + ATP = O-phospho-L-tyrosyl-[protein] + ADP + H(+). It carries out the reaction L-seryl-[protein] + ATP = O-phospho-L-seryl-[protein] + ADP + H(+). The enzyme catalyses L-threonyl-[protein] + ATP = O-phospho-L-threonyl-[protein] + ADP + H(+). In terms of biological role, protein kinase which phosphorylates and activates MPK4 in vitro. This is Mitogen-activated protein kinase kinase 5 from Leishmania mexicana.